The chain runs to 317 residues: Ciliary microtubule inner protein 2A (317 aa).

The interval 131-153 (TPDTPHPPCPPGRKGDSRDLGHP) is disordered.

This sequence belongs to the CIMIP2 family. As to quaternary structure, microtubule inner protein component of sperm flagellar doublet microtubules.

The protein localises to the cytoplasm. It localises to the cytoskeleton. It is found in the flagellum axoneme. In terms of biological role, microtubule inner protein (MIP) part of the dynein-decorated doublet microtubules (DMTs) in flagellum axoneme. Binds to the intra-tubulin interfaces. In Homo sapiens (Human), this protein is Ciliary microtubule inner protein 2A.